The chain runs to 548 residues: Membrane protein insertase YidC (548 aa).

A helical transmembrane segment spans residues 6-26 (NLLVIALLFVSFMIWQAWEQD). The tract at residues 28–55 (NPQPQAQQTTQTTTTAAGSAADQGVPAS) is disordered. Residues 30–50 (QPQAQQTTQTTTTAAGSAADQ) are compositionally biased toward low complexity. 4 helical membrane passes run 350 to 370 (FVGN…GIMY), 420 to 440 (LGGC…YYML), 458 to 478 (LSAQ…MFFI), and 499 to 519 (PVIF…YYIV).

It belongs to the OXA1/ALB3/YidC family. Type 1 subfamily. Interacts with the Sec translocase complex via SecD. Specifically interacts with transmembrane segments of nascent integral membrane proteins during membrane integration.

Its subcellular location is the cell inner membrane. Required for the insertion and/or proper folding and/or complex formation of integral membrane proteins into the membrane. Involved in integration of membrane proteins that insert both dependently and independently of the Sec translocase complex, as well as at least some lipoproteins. Aids folding of multispanning membrane proteins. This chain is Membrane protein insertase YidC, found in Shigella flexneri.